A 395-amino-acid polypeptide reads, in one-letter code: MVQSLHEFLEENINYLKENGLYNEIDTIEGANGPEIKINGKSYINLSSNNYLGLATNEDLKSAAKAAIDTHGVGAGAVRTINGTLDLHDELEETLAKFKGTEAAIAYQSGFNCNMAAISAVMNKNDAILSDELNHASIIDGCRLSKAKIIRVNHSDMDDLRAKAKEAVESGQYNKVMYITDGVFSMDGDVAKLPEIVEIAEEFGLLTYVDDAHGSGVMGKGAGTVKHFGLQDKIDFQIGTLSKAIGVVGGYVAGTKELIDWLKAQSRPFLFSTSLAPGDTKAITEAVKKLMDSTELHDKLWDNAQYLKNGLSKLGYDTGESETPITPVIIGDEKTTQEFSKRLKDEGVYVKSIVFPTVPRGTGRVRNMPTAAHTKDMLDEAIAAYEKVGKEMKLI.

110-111 (GF) contributes to the pyridoxal 5'-phosphate binding site. Residue H135 participates in substrate binding. Pyridoxal 5'-phosphate-binding positions include S185, 210-213 (DDAH), and 240-243 (TLSK). K243 is modified (N6-(pyridoxal phosphate)lysine). T357 provides a ligand contact to substrate.

This sequence belongs to the class-II pyridoxal-phosphate-dependent aminotransferase family. In terms of assembly, homodimer. It depends on pyridoxal 5'-phosphate as a cofactor.

The chain is Putative pyridoxal phosphate-dependent acyltransferase from Staphylococcus aureus (strain Mu50 / ATCC 700699).